The sequence spans 358 residues: Arginine kinase (358 aa).

The 83-residue stretch at 2-84 folds into the Phosphagen kinase N-terminal domain; it reads SDADLFSKLD…LDEVIKDYHK (83 aa). 57-61 is a binding site for substrate; sequence GVGIY. The Phosphagen kinase C-terminal domain maps to 112 to 350; the sequence is FIVSTRVRVG…EEILKREKEL (239 aa). ATP is bound by residues 115-119 and His-178; that span reads STRVR. Glu-218 is a binding site for substrate. Arg-222 contributes to the ATP binding site. Cys-265 is a binding site for substrate. ATP-binding positions include 274-278 and 303-308; these read RASVH and RGIHGE. Glu-308 contributes to the substrate binding site.

This sequence belongs to the ATP:guanido phosphotransferase family.

It carries out the reaction L-arginine + ATP = N(omega)-phospho-L-arginine + ADP + H(+). In Turbo cornutus (Horned turban), this protein is Arginine kinase.